Consider the following 200-residue polypeptide: Small ribosomal subunit protein mS26 (200 aa).

A mitochondrion-targeting transit peptide spans 1 to 27 (MLRALNRLAARPGGQPPTLLLLPVRGR). K159 is subject to N6-acetyllysine.

The protein belongs to the mitochondrion-specific ribosomal protein mS26 family. Component of the mitochondrial ribosome small subunit (28S) which comprises a 12S rRNA and about 30 distinct proteins.

The protein resides in the mitochondrion. The sequence is that of Small ribosomal subunit protein mS26 (Mrps26) from Rattus norvegicus (Rat).